The sequence spans 618 residues: UvrABC system protein C (618 aa).

One can recognise a GIY-YIG domain in the interval 19–97 (SEPGIYRMLD…IKALRPKYNV (79 aa)). Residues 208 to 243 (QIILDELAERMKNAVSQLNFEEAAVLRDQIKNLRLI) enclose the UVR domain.

It belongs to the UvrC family. As to quaternary structure, interacts with UvrB in an incision complex.

The protein localises to the cytoplasm. The UvrABC repair system catalyzes the recognition and processing of DNA lesions. UvrC both incises the 5' and 3' sides of the lesion. The N-terminal half is responsible for the 3' incision and the C-terminal half is responsible for the 5' incision. This Legionella pneumophila (strain Lens) protein is UvrABC system protein C.